The sequence spans 353 residues: UDP-N-acetylglucosamine--N-acetylmuramyl-(pentapeptide) pyrophosphoryl-undecaprenol N-acetylglucosamine transferase (353 aa).

UDP-N-acetyl-alpha-D-glucosamine contacts are provided by residues 11-13, Arg164, Ser194, and Gln289; that span reads SAG.

This sequence belongs to the glycosyltransferase 28 family. MurG subfamily.

It localises to the cell membrane. It catalyses the reaction di-trans,octa-cis-undecaprenyl diphospho-N-acetyl-alpha-D-muramoyl-L-alanyl-D-glutamyl-meso-2,6-diaminopimeloyl-D-alanyl-D-alanine + UDP-N-acetyl-alpha-D-glucosamine = di-trans,octa-cis-undecaprenyl diphospho-[N-acetyl-alpha-D-glucosaminyl-(1-&gt;4)]-N-acetyl-alpha-D-muramoyl-L-alanyl-D-glutamyl-meso-2,6-diaminopimeloyl-D-alanyl-D-alanine + UDP + H(+). It functions in the pathway cell wall biogenesis; peptidoglycan biosynthesis. Functionally, cell wall formation. Catalyzes the transfer of a GlcNAc subunit on undecaprenyl-pyrophosphoryl-MurNAc-pentapeptide (lipid intermediate I) to form undecaprenyl-pyrophosphoryl-MurNAc-(pentapeptide)GlcNAc (lipid intermediate II). The chain is UDP-N-acetylglucosamine--N-acetylmuramyl-(pentapeptide) pyrophosphoryl-undecaprenol N-acetylglucosamine transferase from Clostridium kluyveri (strain ATCC 8527 / DSM 555 / NBRC 12016 / NCIMB 10680 / K1).